Consider the following 142-residue polypeptide: MMSFVSLLLVGILFHATQAEQLTKCEVFRELKDLKGYGGVSLPEWVCTTFHTSGYDTQAIVQNNDSTEYGLFQINNKIWCKDDQNPHSSNICNISCDKFLDDDLTDDIMCVKKILDKVGINYWLAHKALCSEKLDQWLCEKL.

The first 19 residues, 1-19, serve as a signal peptide directing secretion; sequence MMSFVSLLLVGILFHATQA. Residues 20–142 enclose the C-type lysozyme domain; the sequence is EQLTKCEVFR…KLDQWLCEKL (123 aa). 4 disulfide bridges follow: Cys25-Cys139, Cys47-Cys130, Cys80-Cys96, and Cys92-Cys110. A glycan (N-linked (GlcNAc...) asparagine) is linked at Asn64. Residues Lys98, Asp101, Asp103, Asp106, and Asp107 each coordinate Ca(2+).

This sequence belongs to the glycosyl hydrolase 22 family. Lactose synthase (LS) is a heterodimer of a catalytic component, beta1,4-galactosyltransferase (beta4Gal-T1) and a regulatory component, alpha-lactalbumin (LA). In terms of tissue distribution, mammary gland specific. Secreted in milk.

Its subcellular location is the secreted. Functionally, regulatory subunit of lactose synthase, changes the substrate specificity of galactosyltransferase in the mammary gland making glucose a good acceptor substrate for this enzyme. This enables LS to synthesize lactose, the major carbohydrate component of milk. In other tissues, galactosyltransferase transfers galactose onto the N-acetylglucosamine of the oligosaccharide chains in glycoproteins. This Bos taurus (Bovine) protein is Alpha-lactalbumin (LALBA).